The primary structure comprises 333 residues: L-lactate dehydrogenase B chain (333 aa).

NAD(+) is bound by residues 29 to 57 (GQVG…LEDK) and R99. The substrate site is built by R106, N138, and R169. N138 provides a ligand contact to NAD(+). Residue H193 is the Proton acceptor of the active site. T248 serves as a coordination point for substrate.

It belongs to the LDH/MDH superfamily. LDH family. As to quaternary structure, homotetramer.

The protein resides in the cytoplasm. The enzyme catalyses (S)-lactate + NAD(+) = pyruvate + NADH + H(+). The protein operates within fermentation; pyruvate fermentation to lactate; (S)-lactate from pyruvate: step 1/1. In terms of biological role, interconverts simultaneously and stereospecifically pyruvate and lactate with concomitant interconversion of NADH and NAD(+). In Caiman crocodilus apaporiensis (Rio Apaporis caiman), this protein is L-lactate dehydrogenase B chain (LDHB).